The following is a 212-amino-acid chain: Large ribosomal subunit protein uL3 (212 aa).

A compositionally biased stretch (polar residues) spans 136–155; that stretch reads THGNSLSHRSNGSIGQNQTP. Positions 136 to 157 are disordered; that stretch reads THGNSLSHRSNGSIGQNQTPGR. N5-methylglutamine is present on glutamine 153.

The protein belongs to the universal ribosomal protein uL3 family. Part of the 50S ribosomal subunit. Forms a cluster with proteins L14 and L19. Methylated by PrmB.

Its function is as follows. One of the primary rRNA binding proteins, it binds directly near the 3'-end of the 23S rRNA, where it nucleates assembly of the 50S subunit. The polypeptide is Large ribosomal subunit protein uL3 (Shewanella putrefaciens (strain CN-32 / ATCC BAA-453)).